We begin with the raw amino-acid sequence, 647 residues long: DNA mismatch repair protein MutL (647 aa).

Positions 375–395 (KQEEPQAVKQPPQLWQPPKQE) are disordered. Residues 383 to 395 (KQPPQLWQPPKQE) show a composition bias toward low complexity.

Belongs to the DNA mismatch repair MutL/HexB family.

In terms of biological role, this protein is involved in the repair of mismatches in DNA. It is required for dam-dependent methyl-directed DNA mismatch repair. May act as a 'molecular matchmaker', a protein that promotes the formation of a stable complex between two or more DNA-binding proteins in an ATP-dependent manner without itself being part of a final effector complex. The chain is DNA mismatch repair protein MutL from Bacillus cereus (strain B4264).